The following is a 498-amino-acid chain: Minor fimbrium subunit Mfa1 (498 aa).

The first 19 residues, 1-19 (MKLNKMFLVGALLSLGFAS), serve as a signal peptide directing secretion. C20 is lipidated: N-palmitoyl cysteine. A lipid anchor (S-diacylglycerol cysteine) is attached at C20. A propeptide spanning residues 20 to 50 (CSKEGNGPAPDSSSTADTHMSVSMSLPQHNR) is cleaved from the precursor. Positions 436-476 (SGNPFVPTDPDPNNPDTPDNPDTPDPEDPDTPNPEEPLPVQ) are disordered.

This sequence belongs to the bacteroidetes fimbrillin superfamily. FimA/Mfa1 family. As to quaternary structure, structural component of the fimbrial stalk. Minor fimbriae are composed of a structural subunit, such as the 53 kDa fimbrillin, and the accessory subunits Mfa3, Mfa4 and Mfa5. Fimbrium assembly occurs by linear, head-to-tail oligomerization of fimbrial subunits. This is mediated via insertion of a C-terminal beta-strand from one subunit into a groove in the N-terminal domain of the following subunit.

It is found in the fimbrium. Its subcellular location is the cell outer membrane. Functionally, structural subunit of the minor fimbriae. These filamentous pili are attached to the cell surface; they mediate biofilm formation, adhesion onto host cells and onto other bacteria that are part of the oral microbiome. They play an important role in invasion of periodontal tissues and are recognized as major virulence factors. Mfa1 orthologs from different strains have highly divergent sequences, and this correlates with pathogenicity. The sequence is that of Minor fimbrium subunit Mfa1 from Porphyromonas gingivalis (Bacteroides gingivalis).